A 224-amino-acid chain; its full sequence is Large ribosomal subunit protein uL4 (224 aa).

A disordered region spans residues 54-73 (NRSEVSHSTKKPFRQKGTGN).

Belongs to the universal ribosomal protein uL4 family. As to quaternary structure, part of the 50S ribosomal subunit.

In terms of biological role, one of the primary rRNA binding proteins, this protein initially binds near the 5'-end of the 23S rRNA. It is important during the early stages of 50S assembly. It makes multiple contacts with different domains of the 23S rRNA in the assembled 50S subunit and ribosome. Its function is as follows. Forms part of the polypeptide exit tunnel. The sequence is that of Large ribosomal subunit protein uL4 from Chlamydia felis (strain Fe/C-56) (Chlamydophila felis).